The sequence spans 88 residues: UPF0297 protein Ccel_2240 (88 aa).

Belongs to the UPF0297 family.

This is UPF0297 protein Ccel_2240 from Ruminiclostridium cellulolyticum (strain ATCC 35319 / DSM 5812 / JCM 6584 / H10) (Clostridium cellulolyticum).